The primary structure comprises 1070 residues: DNA-directed RNA polymerase subunit beta (1070 aa).

The protein belongs to the RNA polymerase beta chain family. In terms of assembly, in plastids the minimal PEP RNA polymerase catalytic core is composed of four subunits: alpha, beta, beta', and beta''. When a (nuclear-encoded) sigma factor is associated with the core the holoenzyme is formed, which can initiate transcription.

The protein resides in the plastid. It is found in the chloroplast. The enzyme catalyses RNA(n) + a ribonucleoside 5'-triphosphate = RNA(n+1) + diphosphate. Its function is as follows. DNA-dependent RNA polymerase catalyzes the transcription of DNA into RNA using the four ribonucleoside triphosphates as substrates. In Chloranthus spicatus (Chulantree), this protein is DNA-directed RNA polymerase subunit beta.